The primary structure comprises 1427 residues: Protein NPAT (1427 aa).

The segment at 1–318 (MLLPSDVARL…EEAIQDILEQ (318 aa)) is interaction with MIZF. In terms of domain architecture, LisH spans 3–35 (LPSDVARLVLGYLQQENLISTCQTFILESSDLK). Required for activation of histone gene transcription and interaction with MIZF stretches follow at residues 5 to 25 (SDVARLVLGYLQQENLISTCQ) and 121 to 145 (KRQRKLASQTAPASAELLTLPYLSG). Positions 199 to 231 (KKAHASLMSPGRRKSESQRKSTTLSGPHSTIRN) are disordered. S207 carries the post-translational modification Phosphoserine. Residues 218–231 (KSTTLSGPHSTIRN) show a composition bias toward polar residues. Residues 262 to 338 (KLAENINKFL…FDLFDYGKTK (77 aa)) are mediates transcriptional activation. 2 positions are modified to phosphoserine: S554 and S599. Residues 628–644 (SLSSTKQPSNDSASVEL) are compositionally biased toward polar residues. Disordered regions lie at residues 628–669 (SLSS…VKEE) and 683–732 (EKVA…SAEI). Residues 629-653 (LSSTKQPSNDSASVELNHTENEAQA) form a required for acceleration of G1 phase region. Positions 654-665 (SKSENSQEPSSS) are enriched in low complexity. Residues 695–711 (VENSHSLPPESVCSSVG) are compositionally biased toward polar residues. Residues S775 and S779 each carry the phosphoserine; by CDK2 modification. 2 required for acceleration of G1 phase regions span residues 828 to 853 (QNEDGIAFSANVTPCVSKDGGYIQLM) and 1039 to 1054 (KSEETTVPFPEESIVP). Disordered regions lie at residues 1095-1121 (FPNLDSPNVSSTLKPPSNNAIKREKEK) and 1133-1152 (SAISRHTTIRETQSEKKVSP). Polar residues predominate over residues 1097–1114 (NLDSPNVSSTLKPPSNNA). Position 1100 is a phosphoserine; by CDK2 (S1100). Glycyl lysine isopeptide (Lys-Gly) (interchain with G-Cter in SUMO2) cross-links involve residues K1116 and K1149. Basic and acidic residues predominate over residues 1140–1151 (TIRETQSEKKVS). 2 positions are modified to phosphoserine: S1151 and S1200. K1228 carries the post-translational modification N6-acetyllysine. The tract at residues 1228 to 1252 (KDLKQEQTKSASSLITTEMLQDIQR) is required for acceleration of G1 phase. Disordered regions lie at residues 1253-1327 (HSSV…SENS) and 1348-1413 (SATP…FPAG). Position 1254 is a phosphoserine (S1254). T1270 carries the post-translational modification Phosphothreonine; by CDK2. A compositionally biased stretch (basic and acidic residues) spans 1276–1285 (GEKHKEEPID). K1280 is covalently cross-linked (Glycyl lysine isopeptide (Lys-Gly) (interchain with G-Cter in SUMO2)). A required for acceleration of G1 phase region spans residues 1325–1349 (ENSVNMAAHTLMILSRAAISRTTSA). A compositionally biased stretch (polar residues) spans 1348–1365 (SATPLKDNTQQFRASSRS). T1350 carries the phosphothreonine; by CDK2 modification. Residues 1371-1382 (KIEELDERERNS) are compositionally biased toward basic and acidic residues. Residues 1383-1394 (RPSSKNLTNSSI) are compositionally biased toward polar residues. Basic residues predominate over residues 1396–1406 (MKKKKIKKKKL).

Belongs to the NPAT family. As to quaternary structure, interacts with the cylin/CDK complexes CCNE1/CDK2 and CCNA1/CDK2. Interacts with BZW1, CASP8AP2, CREBBP, MIZF and YY1. Interacts with the RUVBL1, RUVBL2 and TRRAP subunits of the NuA4 complex. May also interact with GAPDH, NME1, NME2 and STIP1. In terms of processing, phosphorylated at Ser-775, Ser-779, Ser-1100, Thr-1270 and Thr-1350 by CCNE1/CDK2 at G1-S transition and until prophase, which promotes association with histone gene clusters and stimulates activation of histone transcription. Also phosphorylated by CCNA1/CDK2 in vitro. In terms of tissue distribution, ubiquitously expressed.

It localises to the nucleus. The protein localises to the cajal body. Required for progression through the G1 and S phases of the cell cycle and for S phase entry. Activates transcription of the histone H2A, histone H2B, histone H3 and histone H4 genes in conjunction with MIZF. Also positively regulates the ATM, MIZF and PRKDC promoters. Transcriptional activation may be accomplished at least in part by the recruitment of the NuA4 histone acetyltransferase (HAT) complex to target gene promoters. The sequence is that of Protein NPAT (NPAT) from Homo sapiens (Human).